A 146-amino-acid polypeptide reads, in one-letter code: D-aminoacyl-tRNA deacylase (146 aa).

The short motif at 137–138 is the Gly-cisPro motif, important for rejection of L-amino acids element; the sequence is GP.

It belongs to the DTD family. As to quaternary structure, homodimer.

The protein resides in the cytoplasm. It catalyses the reaction glycyl-tRNA(Ala) + H2O = tRNA(Ala) + glycine + H(+). The catalysed reaction is a D-aminoacyl-tRNA + H2O = a tRNA + a D-alpha-amino acid + H(+). In terms of biological role, an aminoacyl-tRNA editing enzyme that deacylates mischarged D-aminoacyl-tRNAs. Also deacylates mischarged glycyl-tRNA(Ala), protecting cells against glycine mischarging by AlaRS. Acts via tRNA-based rather than protein-based catalysis; rejects L-amino acids rather than detecting D-amino acids in the active site. By recycling D-aminoacyl-tRNA to D-amino acids and free tRNA molecules, this enzyme counteracts the toxicity associated with the formation of D-aminoacyl-tRNA entities in vivo and helps enforce protein L-homochirality. This is D-aminoacyl-tRNA deacylase from Bacillus cereus (strain Q1).